A 162-amino-acid chain; its full sequence is MALLDRTARSFLLTEIVSGMALTLKYFFKPKATINYPYEKNPISPRFKGEHALRRYANGEERCIACKLCEAVCPALAITIEAEPRADGSRRTTRYDIDMTKCIYCGLCEEACPVDAIVEGPNLEFATETREELMYNKDRLLANGDRWEPEIARRLELDAPYR.

4Fe-4S ferredoxin-type domains lie at 53–83 (LRRY…IEAE) and 93–122 (TRYD…EGPN). C63, C66, C69, C73, C102, C105, C108, and C112 together coordinate [4Fe-4S] cluster.

It belongs to the complex I 23 kDa subunit family. NDH-1 is composed of 14 different subunits. Subunits NuoA, H, J, K, L, M, N constitute the membrane sector of the complex. [4Fe-4S] cluster serves as cofactor.

The protein resides in the cell inner membrane. The enzyme catalyses a quinone + NADH + 5 H(+)(in) = a quinol + NAD(+) + 4 H(+)(out). In terms of biological role, NDH-1 shuttles electrons from NADH, via FMN and iron-sulfur (Fe-S) centers, to quinones in the respiratory chain. The immediate electron acceptor for the enzyme in this species is believed to be ubiquinone. Couples the redox reaction to proton translocation (for every two electrons transferred, four hydrogen ions are translocated across the cytoplasmic membrane), and thus conserves the redox energy in a proton gradient. The sequence is that of NADH-quinone oxidoreductase subunit I from Granulibacter bethesdensis (strain ATCC BAA-1260 / CGDNIH1).